A 391-amino-acid chain; its full sequence is Chaperone protein DnaJ (391 aa).

Residues 4 to 68 form the J domain; that stretch reads DFYDVLGVSR…ETRQQYDQLG (65 aa). The segment covering 53–79 has biased composition (basic and acidic residues); it reads DVLTDEETRQQYDQLGHERFEEAEKRG. Disordered regions lie at residues 53-94 and 117-136; these read DVLT…MGGA and FFGGAGGGGGRGRSGPEQGR. Gly residues-rich tracts occupy residues 81–94 and 119–129; these read TGNGGGGAGGMGGA and GGAGGGGGRGR. Residues 152 to 234 form a CR-type zinc finger; it reads GVSKQVTVRR…CGGQGQTRER (83 aa). Zn(2+) contacts are provided by cysteine 165, cysteine 168, cysteine 182, cysteine 185, cysteine 208, cysteine 211, cysteine 222, and cysteine 225. CXXCXGXG motif repeat units follow at residues 165–172, 182–189, 208–215, and 222–229; these read CADCGGSG, CPQCDGQG, CSRCGGEG, and CSTCGGQG.

The protein belongs to the DnaJ family. In terms of assembly, homodimer. Zn(2+) serves as cofactor.

Its subcellular location is the cytoplasm. Functionally, participates actively in the response to hyperosmotic and heat shock by preventing the aggregation of stress-denatured proteins and by disaggregating proteins, also in an autonomous, DnaK-independent fashion. Unfolded proteins bind initially to DnaJ; upon interaction with the DnaJ-bound protein, DnaK hydrolyzes its bound ATP, resulting in the formation of a stable complex. GrpE releases ADP from DnaK; ATP binding to DnaK triggers the release of the substrate protein, thus completing the reaction cycle. Several rounds of ATP-dependent interactions between DnaJ, DnaK and GrpE are required for fully efficient folding. Also involved, together with DnaK and GrpE, in the DNA replication of plasmids through activation of initiation proteins. In Halobacterium salinarum (strain ATCC 29341 / DSM 671 / R1), this protein is Chaperone protein DnaJ.